We begin with the raw amino-acid sequence, 204 residues long: Holliday junction branch migration complex subunit RuvA (204 aa).

Positions 1–64 (MIGRLRGIIL…EDAQLLYGFN (64 aa)) are domain I. The interval 65–142 (NKQERALFRE…KGLNGDLFNN (78 aa)) is domain II. The flexible linker stretch occupies residues 143 to 155 (TGDISLPTASPQT). The domain III stretch occupies residues 156-204 (SDADIEAEAASALVALGYKPQEASRLVSKIAKPGADCETLIRDALRAAL).

The protein belongs to the RuvA family. In terms of assembly, homotetramer. Forms an RuvA(8)-RuvB(12)-Holliday junction (HJ) complex. HJ DNA is sandwiched between 2 RuvA tetramers; dsDNA enters through RuvA and exits via RuvB. An RuvB hexamer assembles on each DNA strand where it exits the tetramer. Each RuvB hexamer is contacted by two RuvA subunits (via domain III) on 2 adjacent RuvB subunits; this complex drives branch migration. In the full resolvosome a probable DNA-RuvA(4)-RuvB(12)-RuvC(2) complex forms which resolves the HJ.

It localises to the cytoplasm. Functionally, the RuvA-RuvB-RuvC complex processes Holliday junction (HJ) DNA during genetic recombination and DNA repair, while the RuvA-RuvB complex plays an important role in the rescue of blocked DNA replication forks via replication fork reversal (RFR). RuvA specifically binds to HJ cruciform DNA, conferring on it an open structure. The RuvB hexamer acts as an ATP-dependent pump, pulling dsDNA into and through the RuvAB complex. HJ branch migration allows RuvC to scan DNA until it finds its consensus sequence, where it cleaves and resolves the cruciform DNA. The polypeptide is Holliday junction branch migration complex subunit RuvA (Yersinia pseudotuberculosis serotype O:1b (strain IP 31758)).